Consider the following 378-residue polypeptide: MKILVDENMPYARDLFSRLGEVTAVPGRPIPVAQLADADALMVRSVTKVNESLLAGKPIKFVGTATAGTDHVDEAWLKQAGIGFSAAPGCNAIAVVEYVFSSLLMLAERDGFSLHERTVGIVGVGNVGRRLQARLEALGIKTLLCDPPRADRGDEGDFRSLDELVQHADILTFHTPLFKDGPYKTLHLADEKLIRSLKPGAILINACRGAVVDNTALLTCLSEGQKLSVVLDVWEGEPELNVELLKKVDIGTPHIAGYTLEGKARGTTQVFEAYSKFIGHEQHVALDTLLPAPEFGRITLHGPLDQPTLKRLVHLVYDVRRDDAPLRKVAGIPGEFDKLRKNYLERREWSSLYVICDDASAASLLCKLGFNAVHHPAR.

Substrate-binding residues include S45 and T66. The NAD(+) site is built by D146 and T175. Residue R208 is part of the active site. Residue D232 coordinates NAD(+). E237 is a catalytic residue. H254 acts as the Proton donor in catalysis. G257 serves as a coordination point for NAD(+). Y258 is a substrate binding site.

The protein belongs to the D-isomer specific 2-hydroxyacid dehydrogenase family. PdxB subfamily. Homodimer.

The protein resides in the cytoplasm. It carries out the reaction 4-phospho-D-erythronate + NAD(+) = (R)-3-hydroxy-2-oxo-4-phosphooxybutanoate + NADH + H(+). Its pathway is cofactor biosynthesis; pyridoxine 5'-phosphate biosynthesis; pyridoxine 5'-phosphate from D-erythrose 4-phosphate: step 2/5. Its function is as follows. Catalyzes the oxidation of erythronate-4-phosphate to 3-hydroxy-2-oxo-4-phosphonooxybutanoate. The polypeptide is Erythronate-4-phosphate dehydrogenase (Escherichia coli O45:K1 (strain S88 / ExPEC)).